Consider the following 70-residue polypeptide: Small ribosomal subunit protein bS21B (70 aa).

This sequence belongs to the bacterial ribosomal protein bS21 family.

This chain is Small ribosomal subunit protein bS21B, found in Rhizobium etli (strain ATCC 51251 / DSM 11541 / JCM 21823 / NBRC 15573 / CFN 42).